The primary structure comprises 518 residues: Endoglucanase 18 (518 aa).

At 1–35 (MANCVRCCCWLLVLMLMALAITAAVVFVRYKNGEG) the chain is on the cytoplasmic side. A helical membrane pass occupies residues 36–56 (VFPFPGVPGAVDHKYADALAV). Topologically, residues 57–518 (ALQFFQVQKS…STSSLARSLS (462 aa)) are extracellular. N-linked (GlcNAc...) asparagine glycosylation occurs at Asn-71. Asp-101 (nucleophile) is an active-site residue. Asn-214, Asn-251, and Asn-272 each carry an N-linked (GlcNAc...) asparagine glycan. Residue His-436 is part of the active site. Residue Asn-477 is glycosylated (N-linked (GlcNAc...) asparagine). Catalysis depends on residues Asp-482 and Glu-491.

The protein belongs to the glycosyl hydrolase 9 (cellulase E) family.

The protein localises to the membrane. The enzyme catalyses Endohydrolysis of (1-&gt;4)-beta-D-glucosidic linkages in cellulose, lichenin and cereal beta-D-glucans.. In Oryza sativa subsp. japonica (Rice), this protein is Endoglucanase 18.